Consider the following 1181-residue polypeptide: 1-phosphatidylinositol 4,5-bisphosphate phosphodiesterase beta-2 (1181 aa).

Residues 312-463 (QDMTQPLNHY…LRGKILIKNK (152 aa)) enclose the PI-PLC X-box domain. Histidine 327 is an active-site residue. Ca(2+)-binding residues include asparagine 328, glutamate 357, and aspartate 359. The active site involves histidine 374. Position 408 (glutamate 408) interacts with Ca(2+). The tract at residues 465–534 (NQFSGPASPS…EEIKKMQSDE (70 aa)) is disordered. Residues 503 to 525 (TEVEEEEVVEEEEEEESGNLDEE) show a composition bias toward acidic residues. One can recognise a PI-PLC Y-box domain in the interval 547 to 663 (MSSLVNYIQP…GYLLKHEFMR (117 aa)). The C2 domain occupies 666 to 791 (DKQFNPFSVD…CLRSESNMAL (126 aa)). Residues 847–890 (SGTPVASQSNGAPVSAGNGSTAPGTKATGEEATKEVTEPQTASL) are disordered. Over residues 850 to 869 (PVASQSNGAPVSAGNGSTAP) the composition is skewed to polar residues. Basic and acidic residues predominate over residues 874-883 (TGEEATKEVT). Residues 893–940 (LRELKGVVKLQRRHEKELRELERRGARRWEELLQRGAAQLAELQTQAA) are a coiled coil. Serine 950 is modified (phosphoserine). Coiled coils occupy residues 974 to 1026 (PRVQ…AELK) and 1075 to 1141 (HIQE…VRAY). The disordered stretch occupies residues 1149–1181 (EAEDKPERSCEASEESCPQEPLVSKADTQESRL). Positions 1150-1159 (AEDKPERSCE) are enriched in basic and acidic residues.

As to quaternary structure, interacts with RAC1. Forms a complex composed of at least WDR26, a G-beta:gamma unit, and PLCB2. The cofactor is Ca(2+).

The enzyme catalyses a 1,2-diacyl-sn-glycero-3-phospho-(1D-myo-inositol-4,5-bisphosphate) + H2O = 1D-myo-inositol 1,4,5-trisphosphate + a 1,2-diacyl-sn-glycerol + H(+). The catalysed reaction is a 1,2-diacyl-sn-glycero-3-phospho-(1D-myo-inositol) + H2O = 1D-myo-inositol 1-phosphate + a 1,2-diacyl-sn-glycerol + H(+). Its function is as follows. The production of the second messenger molecules diacylglycerol (DAG) and inositol 1,4,5-trisphosphate (IP3) is mediated by activated phosphatidylinositol-specific phospholipase C enzymes. In neutrophils, participates in a phospholipase C-activating N-formyl peptide-activated GPCR (G protein-coupled receptor) signaling pathway by promoting RASGRP4 activation by DAG, to promote neutrophil functional responses. The sequence is that of 1-phosphatidylinositol 4,5-bisphosphate phosphodiesterase beta-2 from Mus musculus (Mouse).